Consider the following 275-residue polypeptide: Beta-lactamase OXA-15 (275 aa).

A signal peptide spans 1-21 (MAIRIFAILFSIFSLATFAHA). The active-site Acyl-ester intermediate is the Ser-72. Residue Lys-75 is modified to N6-carboxylysine. Substrate is bound at residue 210–212 (KTG).

Belongs to the class-D beta-lactamase family.

It catalyses the reaction a beta-lactam + H2O = a substituted beta-amino acid. Functionally, hydrolyzes oxacillin, first-generation cephalosporins and ceftazidime. Does not hydrolyze cefotaxime or carbapenems. This Pseudomonas aeruginosa protein is Beta-lactamase OXA-15 (bla).